Reading from the N-terminus, the 1390-residue chain is ABC transporter G family member 43 (1390 aa).

The interval Met-1–Gly-22 is disordered. The ABC transporter 1 domain maps to Ser-137–Gln-411. Gly-171 to Thr-178 contacts ATP. In terms of domain architecture, ABC transmembrane type-2 1 spans Asp-489–Phe-701. A run of 6 helical transmembrane segments spans residues Phe-507 to Tyr-527, Tyr-541 to Leu-561, Ile-594 to Tyr-614, Leu-626 to Phe-646, Val-651 to Val-671, and Phe-737 to Phe-757. Positions Phe-798–Gly-1043 constitute an ABC transporter 2 domain. An ATP-binding site is contributed by Gly-835 to Thr-842. Residues Glu-1115–Tyr-1329 enclose the ABC transmembrane type-2 2 domain. 7 helical membrane passes run Tyr-1134–Leu-1154, Met-1173–Ala-1193, Val-1218–Pro-1238, Phe-1253–Val-1273, Ile-1279–Met-1299, Trp-1307–Ser-1327, and Leu-1362–Ile-1382.

This sequence belongs to the ABC transporter superfamily. ABCG family. PDR (TC 3.A.1.205) subfamily.

The protein localises to the membrane. Its function is as follows. May be a general defense protein. This is ABC transporter G family member 43 (ABCG43) from Arabidopsis thaliana (Mouse-ear cress).